Here is a 289-residue protein sequence, read N- to C-terminus: 4-hydroxy-tetrahydrodipicolinate synthase (289 aa).

T43 serves as a coordination point for pyruvate. The active-site Proton donor/acceptor is Y131. K160 functions as the Schiff-base intermediate with substrate in the catalytic mechanism. I200 is a binding site for pyruvate.

Belongs to the DapA family. Homotetramer; dimer of dimers.

It is found in the cytoplasm. It catalyses the reaction L-aspartate 4-semialdehyde + pyruvate = (2S,4S)-4-hydroxy-2,3,4,5-tetrahydrodipicolinate + H2O + H(+). The protein operates within amino-acid biosynthesis; L-lysine biosynthesis via DAP pathway; (S)-tetrahydrodipicolinate from L-aspartate: step 3/4. Functionally, catalyzes the condensation of (S)-aspartate-beta-semialdehyde [(S)-ASA] and pyruvate to 4-hydroxy-tetrahydrodipicolinate (HTPA). In Methanococcus vannielii (strain ATCC 35089 / DSM 1224 / JCM 13029 / OCM 148 / SB), this protein is 4-hydroxy-tetrahydrodipicolinate synthase.